A 593-amino-acid chain; its full sequence is Glutamate decarboxylase 1 (593 aa).

Residues 1-12 are compositionally biased toward low complexity; it reads MASSTPSPATSS. The disordered stretch occupies residues 1–22; sequence MASSTPSPATSSNAGADPNTTN. At Ser-77 the chain carries Phosphoserine. 189–191 is a 4-aminobutanoate binding site; sequence QLS. An N6-(pyridoxal phosphate)lysine modification is found at Lys-404. 4-aminobutanoate is bound at residue Arg-566.

Belongs to the group II decarboxylase family. As to quaternary structure, homodimer. The cofactor is pyridoxal 5'-phosphate.

It catalyses the reaction L-glutamate + H(+) = 4-aminobutanoate + CO2. Functionally, catalyzes the synthesis of the inhibitory neurotransmitter gamma-aminobutyric acid (GABA) with pyridoxal 5'-phosphate as cofactor. The chain is Glutamate decarboxylase 1 (Gad1) from Mus musculus (Mouse).